The primary structure comprises 382 residues: Succinyl-diaminopimelate desuccinylase (382 aa).

Residue His71 coordinates Zn(2+). Asp73 is a catalytic residue. Position 105 (Asp105) interacts with Zn(2+). The active-site Proton acceptor is Glu139. Positions 140, 168, and 354 each coordinate Zn(2+).

This sequence belongs to the peptidase M20A family. DapE subfamily. In terms of assembly, homodimer. Requires Zn(2+) as cofactor. Co(2+) serves as cofactor.

It carries out the reaction N-succinyl-(2S,6S)-2,6-diaminopimelate + H2O = (2S,6S)-2,6-diaminopimelate + succinate. Its pathway is amino-acid biosynthesis; L-lysine biosynthesis via DAP pathway; LL-2,6-diaminopimelate from (S)-tetrahydrodipicolinate (succinylase route): step 3/3. Its function is as follows. Catalyzes the hydrolysis of N-succinyl-L,L-diaminopimelic acid (SDAP), forming succinate and LL-2,6-diaminopimelate (DAP), an intermediate involved in the bacterial biosynthesis of lysine and meso-diaminopimelic acid, an essential component of bacterial cell walls. In Stutzerimonas stutzeri (strain A1501) (Pseudomonas stutzeri), this protein is Succinyl-diaminopimelate desuccinylase.